Consider the following 877-residue polypeptide: Phosphoenolpyruvate carboxylase (877 aa).

Active-site residues include histidine 138 and lysine 543.

The protein belongs to the PEPCase type 1 family. Mg(2+) is required as a cofactor.

The enzyme catalyses oxaloacetate + phosphate = phosphoenolpyruvate + hydrogencarbonate. Functionally, forms oxaloacetate, a four-carbon dicarboxylic acid source for the tricarboxylic acid cycle. The sequence is that of Phosphoenolpyruvate carboxylase from Aeromonas salmonicida (strain A449).